A 61-amino-acid chain; its full sequence is Small ribosomal subunit protein uS14 (61 aa).

Residues cysteine 24, cysteine 27, cysteine 40, and cysteine 43 each coordinate Zn(2+).

It belongs to the universal ribosomal protein uS14 family. Zinc-binding uS14 subfamily. Part of the 30S ribosomal subunit. Contacts proteins S3 and S10. It depends on Zn(2+) as a cofactor.

Functionally, binds 16S rRNA, required for the assembly of 30S particles and may also be responsible for determining the conformation of the 16S rRNA at the A site. This is Small ribosomal subunit protein uS14 from Anaeromyxobacter dehalogenans (strain 2CP-1 / ATCC BAA-258).